Here is a 239-residue protein sequence, read N- to C-terminus: Putative 3-methyladenine DNA glycosylase (239 aa).

It belongs to the DNA glycosylase MPG family.

The chain is Putative 3-methyladenine DNA glycosylase from Pseudomonas aeruginosa (strain LESB58).